A 473-amino-acid chain; its full sequence is Glutamate--tRNA ligase (473 aa).

The 'HIGH' region signature appears at 9-19 (PSPTGYLHVGG). The Zn(2+) site is built by Cys-98, Cys-100, Cys-125, and Asp-127. The short motif at 237–241 (KLSKR) is the 'KMSKS' region element. An ATP-binding site is contributed by Lys-240.

It belongs to the class-I aminoacyl-tRNA synthetase family. Glutamate--tRNA ligase type 1 subfamily. Monomer. Zn(2+) serves as cofactor.

Its subcellular location is the cytoplasm. It catalyses the reaction tRNA(Glu) + L-glutamate + ATP = L-glutamyl-tRNA(Glu) + AMP + diphosphate. Its function is as follows. Catalyzes the attachment of glutamate to tRNA(Glu) in a two-step reaction: glutamate is first activated by ATP to form Glu-AMP and then transferred to the acceptor end of tRNA(Glu). This chain is Glutamate--tRNA ligase, found in Sodalis glossinidius (strain morsitans).